Here is a 317-residue protein sequence, read N- to C-terminus: 2,3-dihydroxyphenylpropionate/2,3-dihydroxicinnamic acid 1,2-dioxygenase (317 aa).

Residue His-115 is the Proton donor of the active site. The active-site Proton acceptor is His-179.

Belongs to the LigB/MhpB extradiol dioxygenase family. In terms of assembly, homotetramer. Fe(2+) serves as cofactor.

The enzyme catalyses 3-(2,3-dihydroxyphenyl)propanoate + O2 = (2Z,4E)-2-hydroxy-6-oxonona-2,4-dienedioate + H(+). It carries out the reaction (2E)-3-(2,3-dihydroxyphenyl)prop-2-enoate + O2 = (2Z,4E,7E)-2-hydroxy-6-oxonona-2,4,7-trienedioate + H(+). It functions in the pathway aromatic compound metabolism; 3-phenylpropanoate degradation. Catalyzes the non-heme iron(II)-dependent oxidative cleavage of 2,3-dihydroxyphenylpropionic acid and 2,3-dihydroxicinnamic acid into 2-hydroxy-6-ketononadienedioate and 2-hydroxy-6-ketononatrienedioate, respectively. This chain is 2,3-dihydroxyphenylpropionate/2,3-dihydroxicinnamic acid 1,2-dioxygenase, found in Paraburkholderia phymatum (strain DSM 17167 / CIP 108236 / LMG 21445 / STM815) (Burkholderia phymatum).